Here is a 383-residue protein sequence, read N- to C-terminus: Histidinol-phosphate aminotransferase (383 aa).

At K240 the chain carries N6-(pyridoxal phosphate)lysine.

The protein belongs to the class-II pyridoxal-phosphate-dependent aminotransferase family. Histidinol-phosphate aminotransferase subfamily. Homodimer. Pyridoxal 5'-phosphate serves as cofactor.

The catalysed reaction is L-histidinol phosphate + 2-oxoglutarate = 3-(imidazol-4-yl)-2-oxopropyl phosphate + L-glutamate. Its pathway is amino-acid biosynthesis; L-histidine biosynthesis; L-histidine from 5-phospho-alpha-D-ribose 1-diphosphate: step 7/9. The polypeptide is Histidinol-phosphate aminotransferase (Oleidesulfovibrio alaskensis (strain ATCC BAA-1058 / DSM 17464 / G20) (Desulfovibrio alaskensis)).